Here is a 94-residue protein sequence, read N- to C-terminus: Co-chaperonin GroES (94 aa).

Belongs to the GroES chaperonin family. In terms of assembly, heptamer of 7 subunits arranged in a ring. Interacts with the chaperonin GroEL.

The protein localises to the cytoplasm. Together with the chaperonin GroEL, plays an essential role in assisting protein folding. The GroEL-GroES system forms a nano-cage that allows encapsulation of the non-native substrate proteins and provides a physical environment optimized to promote and accelerate protein folding. GroES binds to the apical surface of the GroEL ring, thereby capping the opening of the GroEL channel. The protein is Co-chaperonin GroES of Lactobacillus gasseri (strain ATCC 33323 / DSM 20243 / BCRC 14619 / CIP 102991 / JCM 1131 / KCTC 3163 / NCIMB 11718 / NCTC 13722 / AM63).